The sequence spans 361 residues: Heme A synthase (361 aa).

Transmembrane regions (helical) follow at residues 22 to 42, 109 to 129, 139 to 159, 175 to 195, 208 to 228, 269 to 289, 303 to 323, and 324 to 344; these read LWVR…VLVG, LLAR…WVTG, LLGI…MVAS, HLTI…GLAP, FAFW…LVAG, FVHR…AIAT, VLLF…LLMV, and VPMD…GFAT. Histidine 271 lines the heme pocket. Heme is bound at residue histidine 332.

This sequence belongs to the COX15/CtaA family. Type 2 subfamily. Interacts with CtaB. Heme b is required as a cofactor.

The protein localises to the cell membrane. The enzyme catalyses Fe(II)-heme o + 2 A + H2O = Fe(II)-heme a + 2 AH2. It functions in the pathway porphyrin-containing compound metabolism; heme A biosynthesis; heme A from heme O: step 1/1. In terms of biological role, catalyzes the conversion of heme O to heme A by two successive hydroxylations of the methyl group at C8. The first hydroxylation forms heme I, the second hydroxylation results in an unstable dihydroxymethyl group, which spontaneously dehydrates, resulting in the formyl group of heme A. In Chelativorans sp. (strain BNC1), this protein is Heme A synthase.